The sequence spans 170 residues: Dual-action ribosomal maturation protein DarP (170 aa).

The protein belongs to the DarP family.

The protein localises to the cytoplasm. In terms of biological role, member of a network of 50S ribosomal subunit biogenesis factors which assembles along the 30S-50S interface, preventing incorrect 23S rRNA structures from forming. Promotes peptidyl transferase center (PTC) maturation. The protein is Dual-action ribosomal maturation protein DarP of Neisseria meningitidis serogroup A / serotype 4A (strain DSM 15465 / Z2491).